We begin with the raw amino-acid sequence, 428 residues long: Enolase (428 aa).

Gln163 lines the (2R)-2-phosphoglycerate pocket. The active-site Proton donor is the Glu205. Mg(2+)-binding residues include Asp242, Glu283, and Asp310. Residues Lys335, Arg364, Ser365, and Lys386 each contribute to the (2R)-2-phosphoglycerate site. Lys335 acts as the Proton acceptor in catalysis.

Belongs to the enolase family. The cofactor is Mg(2+).

The protein localises to the cytoplasm. It is found in the secreted. It localises to the cell surface. The catalysed reaction is (2R)-2-phosphoglycerate = phosphoenolpyruvate + H2O. The protein operates within carbohydrate degradation; glycolysis; pyruvate from D-glyceraldehyde 3-phosphate: step 4/5. Catalyzes the reversible conversion of 2-phosphoglycerate (2-PG) into phosphoenolpyruvate (PEP). It is essential for the degradation of carbohydrates via glycolysis. In Sulfurihydrogenibium sp. (strain YO3AOP1), this protein is Enolase.